A 311-amino-acid polypeptide reads, in one-letter code: 4-hydroxy-tetrahydrodipicolinate synthase (311 aa).

Thr51 contributes to the pyruvate binding site. Residue Tyr140 is the Proton donor/acceptor of the active site. Residue Lys168 is the Schiff-base intermediate with substrate of the active site. A pyruvate-binding site is contributed by Ile209.

The protein belongs to the DapA family. Homotetramer; dimer of dimers.

It is found in the cytoplasm. The enzyme catalyses L-aspartate 4-semialdehyde + pyruvate = (2S,4S)-4-hydroxy-2,3,4,5-tetrahydrodipicolinate + H2O + H(+). The protein operates within amino-acid biosynthesis; L-lysine biosynthesis via DAP pathway; (S)-tetrahydrodipicolinate from L-aspartate: step 3/4. Functionally, catalyzes the condensation of (S)-aspartate-beta-semialdehyde [(S)-ASA] and pyruvate to 4-hydroxy-tetrahydrodipicolinate (HTPA). In Streptococcus gordonii (strain Challis / ATCC 35105 / BCRC 15272 / CH1 / DL1 / V288), this protein is 4-hydroxy-tetrahydrodipicolinate synthase.